The following is a 195-amino-acid chain: MIGVVLAGGKSSRFGGEKLLYKINGKPLILHTIERVLNAKKIEEIVIVTSKEKMKSFEKLGFSVVVDKLKIGPIGGVYTAISHFADVFVVAGDMPLINPKFVDWIVEKFHESNTLVCVPKWKNGYLEPLHAAYSQDFLEMIKRQIEKGEYMLGKAIRASSPCYIKIESLPLEWQESLFNINAKSDLKKIKGALQV.

Residues 6-8 (LAG), Lys18, Asp67, and Asp93 contribute to the GTP site. Asp93 is a binding site for Mg(2+).

It belongs to the MobA family. Mg(2+) is required as a cofactor.

The protein resides in the cytoplasm. The enzyme catalyses Mo-molybdopterin + GTP + H(+) = Mo-molybdopterin guanine dinucleotide + diphosphate. Its function is as follows. Transfers a GMP moiety from GTP to Mo-molybdopterin (Mo-MPT) cofactor (Moco or molybdenum cofactor) to form Mo-molybdopterin guanine dinucleotide (Mo-MGD) cofactor. This Thermococcus sibiricus (strain DSM 12597 / MM 739) protein is Probable molybdenum cofactor guanylyltransferase.